A 98-amino-acid chain; its full sequence is NADH-ubiquinone oxidoreductase chain 4L (98 aa).

A run of 3 helical transmembrane segments spans residues 1–21 (MSLV…GLLM), 29–49 (SLLC…IMIL), and 61–81 (IILL…LVMV).

Belongs to the complex I subunit 4L family. Core subunit of respiratory chain NADH dehydrogenase (Complex I) which is composed of 45 different subunits.

The protein resides in the mitochondrion inner membrane. It carries out the reaction a ubiquinone + NADH + 5 H(+)(in) = a ubiquinol + NAD(+) + 4 H(+)(out). Core subunit of the mitochondrial membrane respiratory chain NADH dehydrogenase (Complex I) which catalyzes electron transfer from NADH through the respiratory chain, using ubiquinone as an electron acceptor. Part of the enzyme membrane arm which is embedded in the lipid bilayer and involved in proton translocation. This is NADH-ubiquinone oxidoreductase chain 4L (MT-ND4L) from Mogera wogura (Japanese mole).